The chain runs to 122 residues: Putative iron-sulfur cluster insertion protein ErpA (122 aa).

Positions 50, 114, and 116 each coordinate iron-sulfur cluster.

The protein belongs to the HesB/IscA family. In terms of assembly, homodimer. The cofactor is iron-sulfur cluster.

Its function is as follows. Required for insertion of 4Fe-4S clusters. The polypeptide is Putative iron-sulfur cluster insertion protein ErpA (Cupriavidus necator (strain ATCC 17699 / DSM 428 / KCTC 22496 / NCIMB 10442 / H16 / Stanier 337) (Ralstonia eutropha)).